The primary structure comprises 357 residues: uncharacterized protein (357 aa).

This is an uncharacterized protein from Mycobacterium bovis (strain ATCC BAA-935 / AF2122/97).